The chain runs to 396 residues: 8-amino-7-oxononanoate synthase (396 aa).

Arg29 is a substrate binding site. 116-117 (GY) is a binding site for pyridoxal 5'-phosphate. Residue His141 coordinates substrate. The pyridoxal 5'-phosphate site is built by Ser187, His215, and Thr243. Position 246 is an N6-(pyridoxal phosphate)lysine (Lys246). Thr360 lines the substrate pocket.

This sequence belongs to the class-II pyridoxal-phosphate-dependent aminotransferase family. BioF subfamily. As to quaternary structure, homodimer. Pyridoxal 5'-phosphate serves as cofactor.

The catalysed reaction is 6-carboxyhexanoyl-[ACP] + L-alanine + H(+) = (8S)-8-amino-7-oxononanoate + holo-[ACP] + CO2. The protein operates within cofactor biosynthesis; biotin biosynthesis. Catalyzes the decarboxylative condensation of pimeloyl-[acyl-carrier protein] and L-alanine to produce 8-amino-7-oxononanoate (AON), [acyl-carrier protein], and carbon dioxide. The polypeptide is 8-amino-7-oxononanoate synthase (Nitrosospira multiformis (strain ATCC 25196 / NCIMB 11849 / C 71)).